We begin with the raw amino-acid sequence, 309 residues long: Porphobilinogen deaminase (309 aa).

Cys-244 is subject to S-(dipyrrolylmethanemethyl)cysteine.

This sequence belongs to the HMBS family. As to quaternary structure, monomer. It depends on dipyrromethane as a cofactor.

The enzyme catalyses 4 porphobilinogen + H2O = hydroxymethylbilane + 4 NH4(+). The protein operates within porphyrin-containing compound metabolism; protoporphyrin-IX biosynthesis; coproporphyrinogen-III from 5-aminolevulinate: step 2/4. In terms of biological role, tetrapolymerization of the monopyrrole PBG into the hydroxymethylbilane pre-uroporphyrinogen in several discrete steps. This Listeria welshimeri serovar 6b (strain ATCC 35897 / DSM 20650 / CCUG 15529 / CIP 8149 / NCTC 11857 / SLCC 5334 / V8) protein is Porphobilinogen deaminase.